Consider the following 260-residue polypeptide: Manganese transport system ATP-binding protein MntA (260 aa).

The ABC transporter domain maps to 10 to 245; sequence ISVDGVSVTY…NLELTFGGLP (236 aa). 43–50 is an ATP binding site; sequence GPNGSGKS.

Belongs to the ABC transporter superfamily.

Functionally, part of an ATP-driven transport system for manganese. This Synechocystis sp. (strain ATCC 27184 / PCC 6803 / Kazusa) protein is Manganese transport system ATP-binding protein MntA (mntA).